Here is a 244-residue protein sequence, read N- to C-terminus: Uridylate kinase (244 aa).

Position 18-21 (18-21 (KVSG)) interacts with ATP. G60 serves as a coordination point for UMP. 2 residues coordinate ATP: G61 and R65. UMP-binding positions include D80 and 141-148 (TGNPFCTT). 4 residues coordinate ATP: T168, Q169, Y174, and D177.

This sequence belongs to the UMP kinase family. Homohexamer.

It is found in the cytoplasm. The catalysed reaction is UMP + ATP = UDP + ADP. It functions in the pathway pyrimidine metabolism; CTP biosynthesis via de novo pathway; UDP from UMP (UMPK route): step 1/1. Inhibited by UTP. Its function is as follows. Catalyzes the reversible phosphorylation of UMP to UDP. The protein is Uridylate kinase of Rickettsia typhi (strain ATCC VR-144 / Wilmington).